The following is a 261-amino-acid chain: Cytochrome c oxidase subunit 3 (261 aa).

Residues 1–15 (MTHQTHAYHMVNPSP) are Mitochondrial matrix-facing. The chain crosses the membrane as a helical span at residues 16–34 (WPLTGALSALLMTSGLTMW). Topologically, residues 35 to 40 (FHYNST) are mitochondrial intermembrane. A helical transmembrane segment spans residues 41-66 (ILLMLGLTTNMLTMYQWWRDIIREST). Over 67–72 (FQGHHT) the chain is Mitochondrial matrix. Residues 73–105 (PTVQKGLRYGMILFIISEVLFFTGFFWAFYHSS) traverse the membrane as a helical segment. Topologically, residues 106-128 (LAPTPELGGCWPPTGIHPLNPLE) are mitochondrial intermembrane. Residues 129–152 (VPLLNTSVLLASGVSITWAHHSLM) form a helical membrane-spanning segment. Over 153 to 155 (EGD) the chain is Mitochondrial matrix. The chain crosses the membrane as a helical span at residues 156–183 (RNHMLQALFITIALGIYFTLLQASEYYE). At 184–190 (APFTISD) the chain is on the mitochondrial intermembrane side. The helical transmembrane segment at 191-223 (GVYGSTFFVATGFHGLHVIIGSTFLIVCFFRQL) threads the bilayer. The Mitochondrial matrix segment spans residues 224–232 (KFHFTSSHH). Residues 233 to 256 (FGFEAAAWYWHFVDVVWLFLYVSI) form a helical membrane-spanning segment. Topologically, residues 257 to 261 (YWWGS) are mitochondrial intermembrane.

Belongs to the cytochrome c oxidase subunit 3 family. Component of the cytochrome c oxidase (complex IV, CIV), a multisubunit enzyme composed of 14 subunits. The complex is composed of a catalytic core of 3 subunits MT-CO1, MT-CO2 and MT-CO3, encoded in the mitochondrial DNA, and 11 supernumerary subunits COX4I, COX5A, COX5B, COX6A, COX6B, COX6C, COX7A, COX7B, COX7C, COX8 and NDUFA4, which are encoded in the nuclear genome. The complex exists as a monomer or a dimer and forms supercomplexes (SCs) in the inner mitochondrial membrane with NADH-ubiquinone oxidoreductase (complex I, CI) and ubiquinol-cytochrome c oxidoreductase (cytochrome b-c1 complex, complex III, CIII), resulting in different assemblies (supercomplex SCI(1)III(2)IV(1) and megacomplex MCI(2)III(2)IV(2)).

It localises to the mitochondrion inner membrane. The enzyme catalyses 4 Fe(II)-[cytochrome c] + O2 + 8 H(+)(in) = 4 Fe(III)-[cytochrome c] + 2 H2O + 4 H(+)(out). Functionally, component of the cytochrome c oxidase, the last enzyme in the mitochondrial electron transport chain which drives oxidative phosphorylation. The respiratory chain contains 3 multisubunit complexes succinate dehydrogenase (complex II, CII), ubiquinol-cytochrome c oxidoreductase (cytochrome b-c1 complex, complex III, CIII) and cytochrome c oxidase (complex IV, CIV), that cooperate to transfer electrons derived from NADH and succinate to molecular oxygen, creating an electrochemical gradient over the inner membrane that drives transmembrane transport and the ATP synthase. Cytochrome c oxidase is the component of the respiratory chain that catalyzes the reduction of oxygen to water. Electrons originating from reduced cytochrome c in the intermembrane space (IMS) are transferred via the dinuclear copper A center (CU(A)) of subunit 2 and heme A of subunit 1 to the active site in subunit 1, a binuclear center (BNC) formed by heme A3 and copper B (CU(B)). The BNC reduces molecular oxygen to 2 water molecules using 4 electrons from cytochrome c in the IMS and 4 protons from the mitochondrial matrix. This Tragelaphus imberbis (Lesser kudu) protein is Cytochrome c oxidase subunit 3 (MT-CO3).